Consider the following 205-residue polypeptide: Protein-L-isoaspartate O-methyltransferase (205 aa).

Serine 56 is a catalytic residue.

It belongs to the methyltransferase superfamily. L-isoaspartyl/D-aspartyl protein methyltransferase family.

Its subcellular location is the cytoplasm. It catalyses the reaction [protein]-L-isoaspartate + S-adenosyl-L-methionine = [protein]-L-isoaspartate alpha-methyl ester + S-adenosyl-L-homocysteine. Catalyzes the methyl esterification of L-isoaspartyl residues in peptides and proteins that result from spontaneous decomposition of normal L-aspartyl and L-asparaginyl residues. It plays a role in the repair and/or degradation of damaged proteins. The polypeptide is Protein-L-isoaspartate O-methyltransferase (Pyrobaculum arsenaticum (strain DSM 13514 / JCM 11321 / PZ6)).